The sequence spans 472 residues: WASH complex subunit 1 (472 aa).

The tract at residues Met1–Arg51 is required for WASH complex assembly. Disordered stretches follow at residues Glu289–Arg365, Gly377–Met412, and Ile426–Ser472. 2 stretches are compositionally biased toward pro residues: residues Leu301–Pro319 and Ser327–Ala336. The interval Gln352–Ser472 is VCA. Positions Gly364–Val386 constitute a WH2 domain. Over residues Asn385–Gln401 the composition is skewed to basic and acidic residues.

It belongs to the WASH1 family. As to quaternary structure, component of the WASH complex.

It is found in the early endosome membrane. The protein localises to the recycling endosome membrane. Its function is as follows. Acts as a nucleation-promoting factor at the surface of endosomes, where it recruits and activates the Arp2/3 complex to induce actin polymerization, playing a key role in the fission of tubules that serve as transport intermediates during endosome sorting. The protein is WASH complex subunit 1 of Xenopus tropicalis (Western clawed frog).